A 362-amino-acid chain; its full sequence is Beta-ketoacyl-[acyl-carrier-protein] synthase III 2 (362 aa).

Residues Cys-113 and His-251 contribute to the active site. The tract at residues 252-256 is ACP-binding; it reads QANIR. Asn-281 is an active-site residue.

This sequence belongs to the thiolase-like superfamily. FabH family. Homodimer.

The protein resides in the cytoplasm. It catalyses the reaction malonyl-[ACP] + acetyl-CoA + H(+) = 3-oxobutanoyl-[ACP] + CO2 + CoA. The protein operates within lipid metabolism; fatty acid biosynthesis. Functionally, catalyzes the condensation reaction of fatty acid synthesis by the addition to an acyl acceptor of two carbons from malonyl-ACP. Catalyzes the first condensation reaction which initiates fatty acid synthesis and may therefore play a role in governing the total rate of fatty acid production. Possesses both acetoacetyl-ACP synthase and acetyl transacylase activities. Its substrate specificity determines the biosynthesis of branched-chain and/or straight-chain of fatty acids. In Vibrio vulnificus (strain CMCP6), this protein is Beta-ketoacyl-[acyl-carrier-protein] synthase III 2.